A 378-amino-acid polypeptide reads, in one-letter code: Mannitol-1-phosphate 5-dehydrogenase (378 aa).

An NAD(+)-binding site is contributed by 4 to 15; sequence SVHFGAGNIGRG.

Belongs to the mannitol dehydrogenase family.

The enzyme catalyses D-mannitol 1-phosphate + NAD(+) = beta-D-fructose 6-phosphate + NADH + H(+). The chain is Mannitol-1-phosphate 5-dehydrogenase from Streptococcus pneumoniae (strain 70585).